Reading from the N-terminus, the 180-residue chain is Inner membrane-spanning protein YciB (180 aa).

The next 5 membrane-spanning stretches (helical) occupy residues 22-42 (IFVASGALIVATLVALAFTWL), 50-70 (MTLVTAAMVLVFGTLTLAFHS), 72-92 (LFIKWKVTVLYVLFALALLVS), 121-141 (LSWAIFFLVCGLLNIYVAFWL), and 149-169 (FKVFGLTALTLIFTLISGVYI).

Belongs to the YciB family.

Its subcellular location is the cell inner membrane. In terms of biological role, plays a role in cell envelope biogenesis, maintenance of cell envelope integrity and membrane homeostasis. This is Inner membrane-spanning protein YciB from Yersinia pseudotuberculosis serotype O:1b (strain IP 31758).